Reading from the N-terminus, the 129-residue chain is Fluoride-specific ion channel FluC (129 aa).

The next 4 helical transmembrane spans lie at phenylalanine 8–alanine 28, alanine 36–leucine 56, phenylalanine 71–valine 91, and alanine 103–leucine 123. Na(+)-binding residues include glycine 78 and threonine 81.

Belongs to the fluoride channel Fluc/FEX (TC 1.A.43) family.

The protein localises to the cell inner membrane. It catalyses the reaction fluoride(in) = fluoride(out). Na(+) is not transported, but it plays an essential structural role and its presence is essential for fluoride channel function. Functionally, fluoride-specific ion channel. Important for reducing fluoride concentration in the cell, thus reducing its toxicity. The chain is Fluoride-specific ion channel FluC from Idiomarina loihiensis (strain ATCC BAA-735 / DSM 15497 / L2-TR).